Consider the following 932-residue polypeptide: F-box protein COS111 (932 aa).

The disordered stretch occupies residues 29-63 (VSAKHRPSSTGVYGHDASTVDHASRSNNNLNLTRS). The span at 53–63 (RSNNNLNLTRS) shows a compositional bias: low complexity. The region spanning 146–193 (RKEISDLPDEVLRNILSNVKDDQRTLVNCLYVNKAFYNATKPTLYERP) is the F-box domain. Over residues 346 to 358 (LSEGKSSDNGNNG) the composition is skewed to polar residues. Disordered stretches follow at residues 346-369 (LSEG…SVSS), 389-450 (TLSG…SNWF), 470-500 (ISSK…TEPF), and 863-893 (SVLP…SNDP). 2 stretches are compositionally biased toward low complexity: residues 395–431 (NNSS…SQID) and 438–447 (TSSKSTSSTS). Residues 876 to 890 (DDTNNGENTIAQPFS) show a composition bias toward polar residues.

Its function is as follows. F-box protein probably involved in ubiquitin conjugation pathway. The chain is F-box protein COS111 (COS111) from Candida glabrata (strain ATCC 2001 / BCRC 20586 / JCM 3761 / NBRC 0622 / NRRL Y-65 / CBS 138) (Yeast).